The primary structure comprises 393 residues: Dual-specificity RNA methyltransferase RlmN (393 aa).

Glutamate 114 (proton acceptor) is an active-site residue. Residues 120–359 enclose the Radical SAM core domain; that stretch reads EDDRATLCVS…VIVRKTRGDD (240 aa). Cysteine 127 and cysteine 364 are oxidised to a cystine. Residues cysteine 134, cysteine 138, and cysteine 141 each contribute to the [4Fe-4S] cluster site. S-adenosyl-L-methionine is bound by residues 188–189, serine 220, 242–244, and asparagine 321; these read GE and SLH. Residue cysteine 364 is the S-methylcysteine intermediate of the active site.

This sequence belongs to the radical SAM superfamily. RlmN family. [4Fe-4S] cluster serves as cofactor.

The protein resides in the cytoplasm. The enzyme catalyses adenosine(2503) in 23S rRNA + 2 reduced [2Fe-2S]-[ferredoxin] + 2 S-adenosyl-L-methionine = 2-methyladenosine(2503) in 23S rRNA + 5'-deoxyadenosine + L-methionine + 2 oxidized [2Fe-2S]-[ferredoxin] + S-adenosyl-L-homocysteine. It carries out the reaction adenosine(37) in tRNA + 2 reduced [2Fe-2S]-[ferredoxin] + 2 S-adenosyl-L-methionine = 2-methyladenosine(37) in tRNA + 5'-deoxyadenosine + L-methionine + 2 oxidized [2Fe-2S]-[ferredoxin] + S-adenosyl-L-homocysteine. Its function is as follows. Specifically methylates position 2 of adenine 2503 in 23S rRNA and position 2 of adenine 37 in tRNAs. m2A2503 modification seems to play a crucial role in the proofreading step occurring at the peptidyl transferase center and thus would serve to optimize ribosomal fidelity. The sequence is that of Dual-specificity RNA methyltransferase RlmN from Actinobacillus pleuropneumoniae serotype 5b (strain L20).